We begin with the raw amino-acid sequence, 714 residues long: Fatty acid oxidation complex subunit alpha (714 aa).

Residues 1–190 (MEMASAFTLN…KLGLVDDVVP (190 aa)) form an enoyl-CoA hydratase region. The 3-hydroxyacyl-CoA dehydrogenase stretch occupies residues 306-714 (APLNSVGILG…FWKTTATDLQ (409 aa)).

In the N-terminal section; belongs to the enoyl-CoA hydratase/isomerase family. The protein in the central section; belongs to the 3-hydroxyacyl-CoA dehydrogenase family. As to quaternary structure, heterotetramer of two alpha chains (FadJ) and two beta chains (FadI).

It localises to the cytoplasm. The catalysed reaction is a (3S)-3-hydroxyacyl-CoA = a (2E)-enoyl-CoA + H2O. It catalyses the reaction a 4-saturated-(3S)-3-hydroxyacyl-CoA = a (3E)-enoyl-CoA + H2O. The enzyme catalyses a (3S)-3-hydroxyacyl-CoA + NAD(+) = a 3-oxoacyl-CoA + NADH + H(+). It carries out the reaction (3S)-3-hydroxybutanoyl-CoA = (3R)-3-hydroxybutanoyl-CoA. It functions in the pathway lipid metabolism; fatty acid beta-oxidation. In terms of biological role, catalyzes the formation of a hydroxyacyl-CoA by addition of water on enoyl-CoA. Also exhibits 3-hydroxyacyl-CoA epimerase and 3-hydroxyacyl-CoA dehydrogenase activities. This Escherichia coli O127:H6 (strain E2348/69 / EPEC) protein is Fatty acid oxidation complex subunit alpha.